Here is a 462-residue protein sequence, read N- to C-terminus: Chromosomal replication initiator protein DnaA (462 aa).

Positions 1–84 (MAVSLWQQCI…RFDIGSRPSA (84 aa)) are domain I, interacts with DnaA modulators. Residues 84–125 (APRPVQATAAVERPKFEQNTKPAKTSFNVNSPEPAMAANHRS) form a domain II region. The tract at residues 126 to 342 (NINRTYQFEN…GALNRVIANA (217 aa)) is domain III, AAA+ region. G170, G172, K173, and T174 together coordinate ATP. The interval 343–462 (NFTGRPITID…YANLIRTLSS (120 aa)) is domain IV, binds dsDNA.

Belongs to the DnaA family. In terms of assembly, oligomerizes as a right-handed, spiral filament on DNA at oriC.

The protein resides in the cytoplasm. Its function is as follows. Plays an essential role in the initiation and regulation of chromosomal replication. ATP-DnaA binds to the origin of replication (oriC) to initiate formation of the DNA replication initiation complex once per cell cycle. Binds the DnaA box (a 9 base pair repeat at the origin) and separates the double-stranded (ds)DNA. Forms a right-handed helical filament on oriC DNA; dsDNA binds to the exterior of the filament while single-stranded (ss)DNA is stabiized in the filament's interior. The ATP-DnaA-oriC complex binds and stabilizes one strand of the AT-rich DNA unwinding element (DUE), permitting loading of DNA polymerase. After initiation quickly degrades to an ADP-DnaA complex that is not apt for DNA replication. Binds acidic phospholipids. The sequence is that of Chromosomal replication initiator protein DnaA from Shewanella sediminis (strain HAW-EB3).